We begin with the raw amino-acid sequence, 220 residues long: Iron-sulfur cluster repair protein YtfE (220 aa).

This sequence belongs to the RIC family. YtfE subfamily. Homodimer.

It is found in the cytoplasm. In terms of biological role, di-iron-containing protein involved in the repair of iron-sulfur clusters damaged by oxidative and nitrosative stress conditions. This is Iron-sulfur cluster repair protein YtfE from Salmonella typhimurium (strain LT2 / SGSC1412 / ATCC 700720).